A 347-amino-acid chain; its full sequence is Haptoglobin (347 aa).

The signal sequence occupies residues 1 to 18 (MRALGAVVTLLLWGQLFA). Residues 31 to 88 (DSCPKPPEIANGYVEHLVRYRCRQFYRLRAEGDGVYTLNDEKQWVNTVAGEKLPECEA) enclose the Sushi domain. Disulfide bonds link C52–C86, C90–C207, C250–C281, and C292–C322. Residues 103 to 345 (IIGGSMDAKG…LKDWVQETMA (243 aa)) enclose the Peptidase S1 domain. N-linked (GlcNAc...) asparagine glycans are attached at residues N148, N182, N256, and N264. The interval 259–264 (VPEKKN) is interaction with CD163.

This sequence belongs to the peptidase S1 family. In terms of assembly, tetramer of two alpha and two beta chains; disulfide-linked. The hemoglobin/haptoglobin complex is composed of a haptoglobin dimer bound to two hemoglobin alpha-beta dimers. Interacts with CD163. Interacts with ERGIC3. Expressed by the liver and secreted in plasma.

It is found in the secreted. As a result of hemolysis, hemoglobin is found to accumulate in the kidney and is secreted in the urine. Haptoglobin captures, and combines with free plasma hemoglobin to allow hepatic recycling of heme iron and to prevent kidney damage. Haptoglobin also acts as an antioxidant, has antibacterial activity and plays a role in modulating many aspects of the acute phase response. Hemoglobin/haptoglobin complexes are rapidly cleared by the macrophage CD163 scavenger receptor expressed on the surface of liver Kupfer cells through an endocytic lysosomal degradation pathway. The chain is Haptoglobin (Hp) from Mus musculus (Mouse).